The primary structure comprises 337 residues: Ketol-acid reductoisomerase (NADP(+)) (337 aa).

The KARI N-terminal Rossmann domain maps to 1-180; that stretch reads MFYEKDADVD…GGGKSGIIET (180 aa). Residues 22–25, arginine 46, serine 49, serine 51, and 81–84 contribute to the NADP(+) site; these read YGSQ and DELQ. Histidine 106 is a catalytic residue. Residue glycine 132 participates in NADP(+) binding. The KARI C-terminal knotted domain maps to 181-326; that stretch reads TFKDECETDL…AELRAMMPWI (146 aa). Mg(2+) is bound by residues aspartate 189, glutamate 193, glutamate 225, and glutamate 229. Residue serine 250 coordinates substrate.

It belongs to the ketol-acid reductoisomerase family. Mg(2+) is required as a cofactor.

The catalysed reaction is (2R)-2,3-dihydroxy-3-methylbutanoate + NADP(+) = (2S)-2-acetolactate + NADPH + H(+). It catalyses the reaction (2R,3R)-2,3-dihydroxy-3-methylpentanoate + NADP(+) = (S)-2-ethyl-2-hydroxy-3-oxobutanoate + NADPH + H(+). Its pathway is amino-acid biosynthesis; L-isoleucine biosynthesis; L-isoleucine from 2-oxobutanoate: step 2/4. It participates in amino-acid biosynthesis; L-valine biosynthesis; L-valine from pyruvate: step 2/4. Its function is as follows. Involved in the biosynthesis of branched-chain amino acids (BCAA). Catalyzes an alkyl-migration followed by a ketol-acid reduction of (S)-2-acetolactate (S2AL) to yield (R)-2,3-dihydroxy-isovalerate. In the isomerase reaction, S2AL is rearranged via a Mg-dependent methyl migration to produce 3-hydroxy-3-methyl-2-ketobutyrate (HMKB). In the reductase reaction, this 2-ketoacid undergoes a metal-dependent reduction by NADPH to yield (R)-2,3-dihydroxy-isovalerate. The sequence is that of Ketol-acid reductoisomerase (NADP(+)) from Pelagibacter ubique (strain HTCC1062).